Here is a 332-residue protein sequence, read N- to C-terminus: Leucine carboxyl methyltransferase 1 homolog (332 aa).

Residues Lys-22, Arg-57, Gly-83, Asp-107, 153–154, and Glu-180 each bind S-adenosyl-L-methionine; that span reads DL.

It belongs to the methyltransferase superfamily. LCMT family.

The protein localises to the cytoplasm. Its subcellular location is the membrane. It carries out the reaction [phosphatase 2A protein]-C-terminal L-leucine + S-adenosyl-L-methionine = [phosphatase 2A protein]-C-terminal L-leucine methyl ester + S-adenosyl-L-homocysteine. In terms of biological role, methylates the carboxyl group of the C-terminal leucine residue of protein phosphatase 2A (PP2A) catalytic subunits to form alpha-leucine ester residues. Involved in brassinosteroid (BR) signaling. Plays a negative role in BR signaling pathway. Functions as a positive regulator of BRI1 receptor-kinase degradation. Methylates PP2A, thus facilitating its association with activated BRI1. This leads to receptor dephosphorylation and degradation, and thus to the termination of BR signaling. May act upstream of ASK7/BIN2. Involved in methylation of PP2A during environmental stress responses. The sequence is that of Leucine carboxyl methyltransferase 1 homolog from Arabidopsis thaliana (Mouse-ear cress).